An 82-amino-acid chain; its full sequence is Cytochrome b559 subunit alpha (82 aa).

Residues 21 to 35 (VIHSITVPALFIAGW) traverse the membrane as a helical segment. A heme-binding site is contributed by H23.

It belongs to the PsbE/PsbF family. In terms of assembly, heterodimer of an alpha subunit and a beta subunit. PSII is composed of 1 copy each of membrane proteins PsbA, PsbB, PsbC, PsbD, PsbE, PsbF, PsbH, PsbI, PsbJ, PsbK, PsbL, PsbM, PsbT, PsbX, PsbY, PsbZ, Psb30/Ycf12, at least 3 peripheral proteins of the oxygen-evolving complex and a large number of cofactors. It forms dimeric complexes. Requires heme b as cofactor.

It is found in the plastid. It localises to the chloroplast thylakoid membrane. In terms of biological role, this b-type cytochrome is tightly associated with the reaction center of photosystem II (PSII). PSII is a light-driven water:plastoquinone oxidoreductase that uses light energy to abstract electrons from H(2)O, generating O(2) and a proton gradient subsequently used for ATP formation. It consists of a core antenna complex that captures photons, and an electron transfer chain that converts photonic excitation into a charge separation. The sequence is that of Cytochrome b559 subunit alpha from Chlamydomonas reinhardtii (Chlamydomonas smithii).